A 187-amino-acid chain; its full sequence is Potassium-transporting ATPase KdpC subunit (187 aa).

A helical transmembrane segment spans residues 11 to 31 (LILLMTVVTGALYPLAVTGIA).

Belongs to the KdpC family. The system is composed of three essential subunits: KdpA, KdpB and KdpC.

The protein resides in the cell inner membrane. In terms of biological role, part of the high-affinity ATP-driven potassium transport (or Kdp) system, which catalyzes the hydrolysis of ATP coupled with the electrogenic transport of potassium into the cytoplasm. This subunit acts as a catalytic chaperone that increases the ATP-binding affinity of the ATP-hydrolyzing subunit KdpB by the formation of a transient KdpB/KdpC/ATP ternary complex. In Pseudomonas entomophila (strain L48), this protein is Potassium-transporting ATPase KdpC subunit.